The sequence spans 1342 residues: DNA-directed RNA polymerase subunit beta (1342 aa).

This sequence belongs to the RNA polymerase beta chain family. As to quaternary structure, the RNAP catalytic core consists of 2 alpha, 1 beta, 1 beta' and 1 omega subunit. When a sigma factor is associated with the core the holoenzyme is formed, which can initiate transcription.

It catalyses the reaction RNA(n) + a ribonucleoside 5'-triphosphate = RNA(n+1) + diphosphate. Its function is as follows. DNA-dependent RNA polymerase catalyzes the transcription of DNA into RNA using the four ribonucleoside triphosphates as substrates. This is DNA-directed RNA polymerase subunit beta from Enterobacter sp. (strain 638).